The primary structure comprises 156 residues: ATP synthase subunit b (156 aa).

A helical transmembrane segment spans residues 7–27 (LFAQMVVFLILAWFTMKFVWP).

It belongs to the ATPase B chain family. As to quaternary structure, F-type ATPases have 2 components, F(1) - the catalytic core - and F(0) - the membrane proton channel. F(1) has five subunits: alpha(3), beta(3), gamma(1), delta(1), epsilon(1). F(0) has three main subunits: a(1), b(2) and c(10-14). The alpha and beta chains form an alternating ring which encloses part of the gamma chain. F(1) is attached to F(0) by a central stalk formed by the gamma and epsilon chains, while a peripheral stalk is formed by the delta and b chains.

Its subcellular location is the cell inner membrane. Its function is as follows. F(1)F(0) ATP synthase produces ATP from ADP in the presence of a proton or sodium gradient. F-type ATPases consist of two structural domains, F(1) containing the extramembraneous catalytic core and F(0) containing the membrane proton channel, linked together by a central stalk and a peripheral stalk. During catalysis, ATP synthesis in the catalytic domain of F(1) is coupled via a rotary mechanism of the central stalk subunits to proton translocation. Functionally, component of the F(0) channel, it forms part of the peripheral stalk, linking F(1) to F(0). In Paraburkholderia phytofirmans (strain DSM 17436 / LMG 22146 / PsJN) (Burkholderia phytofirmans), this protein is ATP synthase subunit b.